A 351-amino-acid polypeptide reads, in one-letter code: Methylthioribose-1-phosphate isomerase (351 aa).

Residues Arg-51–Ala-53, Arg-94, and Gln-199 each bind substrate. Asp-240 acts as the Proton donor in catalysis. Residue Asn-250–Lys-251 participates in substrate binding.

Belongs to the EIF-2B alpha/beta/delta subunits family. MtnA subfamily. In terms of assembly, homodimer.

It catalyses the reaction 5-(methylsulfanyl)-alpha-D-ribose 1-phosphate = 5-(methylsulfanyl)-D-ribulose 1-phosphate. The protein operates within amino-acid biosynthesis; L-methionine biosynthesis via salvage pathway; L-methionine from S-methyl-5-thio-alpha-D-ribose 1-phosphate: step 1/6. In terms of biological role, catalyzes the interconversion of methylthioribose-1-phosphate (MTR-1-P) into methylthioribulose-1-phosphate (MTRu-1-P). The polypeptide is Methylthioribose-1-phosphate isomerase (Bacillus thuringiensis subsp. konkukian (strain 97-27)).